The primary structure comprises 205 residues: Ribonuclease HII (205 aa).

The region spanning 15–205 is the RNase H type-2 domain; it reads SQVCGIDEAG…SFKLRKLGEK (191 aa). Residues Asp21, Glu22, and Asp117 each contribute to the a divalent metal cation site.

This sequence belongs to the RNase HII family. It depends on Mn(2+) as a cofactor. The cofactor is Mg(2+).

The protein resides in the cytoplasm. The enzyme catalyses Endonucleolytic cleavage to 5'-phosphomonoester.. Functionally, endonuclease that specifically degrades the RNA of RNA-DNA hybrids. In Chlorobaculum tepidum (strain ATCC 49652 / DSM 12025 / NBRC 103806 / TLS) (Chlorobium tepidum), this protein is Ribonuclease HII.